Here is a 446-residue protein sequence, read N- to C-terminus: N-succinylarginine dihydrolase (446 aa).

Substrate contacts are provided by residues 19–28 (AGLSFGNEAS), asparagine 110, and 137–138 (HR). Glutamate 174 is a catalytic residue. A substrate-binding site is contributed by arginine 213. Residue histidine 249 is part of the active site. Substrate-binding residues include aspartate 251 and asparagine 364. The active-site Nucleophile is the cysteine 370.

Belongs to the succinylarginine dihydrolase family. In terms of assembly, homodimer.

The enzyme catalyses N(2)-succinyl-L-arginine + 2 H2O + 2 H(+) = N(2)-succinyl-L-ornithine + 2 NH4(+) + CO2. Its pathway is amino-acid degradation; L-arginine degradation via AST pathway; L-glutamate and succinate from L-arginine: step 2/5. Functionally, catalyzes the hydrolysis of N(2)-succinylarginine into N(2)-succinylornithine, ammonia and CO(2). The chain is N-succinylarginine dihydrolase from Serratia proteamaculans (strain 568).